We begin with the raw amino-acid sequence, 189 residues long: MAAPSAPRPPRPRKEPQPLVIPRNAAEEQRLRLERLMRNPEKTVPIPEKLNEWAPRPPPEFVRDVMGSSAGAGSGEFHVYRHLRRREYQRQDFMDAMAEKQRLDEEFQKKLERNKMIAEEQTAKRRRKRQKLKEKKLQAKKNKLEQKKQEKESDQSQERVSSEDDEEDSKEEEEKEDDAEEPSFVMGRG.

Disordered stretches follow at residues 1 to 56 (MAAP…WAPR) and 113 to 189 (RNKM…MGRG). 2 stretches are compositionally biased toward basic and acidic residues: residues 25–41 (AAEE…RNPE) and 113–123 (RNKMIAEEQTA). Residues 49–141 (KLNEWAPRPP…LKEKKLQAKK (93 aa)) are required for RNA-binding. Residues 89–181 (QRQDFMDAMA…EEEKEDDAEE (93 aa)) are a coiled coil. The required for nuclear localization stretch occupies residues 124–136 (KRRRKRQKLKEKK). The span at 124-141 (KRRRKRQKLKEKKLQAKK) shows a compositional bias: basic residues. Positions 142–162 (NKLEQKKQEKESDQSQERVSS) are enriched in basic and acidic residues. Acidic residues predominate over residues 163 to 181 (EDDEEDSKEEEEKEDDAEE).

It belongs to the PRKRIP1 family. As to quaternary structure, component of the pre-catalytic and post-catalytic spliceosome complexes.

It is found in the nucleus. Its subcellular location is the nucleolus. Required for pre-mRNA splicing as component of the spliceosome. Binds double-stranded RNA. In Gallus gallus (Chicken), this protein is PRKR-interacting protein 1 homolog (PRKRIP1).